Consider the following 337-residue polypeptide: Visual pigment-like receptor peropsin (337 aa).

Residues 1–26 (MLRNNLGNSSDSKNEDGSVFSQTEHN) are Extracellular-facing. The N-linked (GlcNAc...) asparagine glycan is linked to Asn-8. The chain crosses the membrane as a helical span at residues 27–49 (IVATYLIMAGMISIISNIIVLGI). The Cytoplasmic portion of the chain corresponds to 50–61 (FIKYKELRTPTN). A helical membrane pass occupies residues 62-87 (AIIINLAVTDIGVSSIGYPMSAASDL). The Extracellular portion of the chain corresponds to 88–101 (YGSWKFGYAGCQVY). Cys-98 and Cys-175 are oxidised to a cystine. The chain crosses the membrane as a helical span at residues 102–121 (AGLNIFFGMASIGLLTVVAV). The Cytoplasmic segment spans residues 122 to 140 (DRYLTICLPDVGRRMTTNT). Residues 141–164 (YIGLILGAWINGLFWALMPIIGWA) form a helical membrane-spanning segment. The Extracellular portion of the chain corresponds to 165-188 (SYAPDPTGATCTINWRKNDRSFVS). A helical membrane pass occupies residues 189–212 (YTMTVIAINFIVPLTVMFYCYYHV). Residues 213-240 (TLSIKHHTTSDCTESLNRDWSDQIDVTK) are Cytoplasmic-facing. Residues 241 to 264 (MSVIMICMFLVAWSPYSIVCLWAS) traverse the membrane as a helical segment. Residues 265-272 (FGDPKKIP) are Extracellular-facing. Residues 273–297 (PPMAIIAPLFAKSSTFYNPCIYVVA) traverse the membrane as a helical segment. Lys-284 is subject to N6-(retinylidene)lysine. Over 298-337 (NKKFRRAMLAMFKCQTHQTMPVTSILPMDVSQNPLASGRI) the chain is Cytoplasmic.

The protein belongs to the G-protein coupled receptor 1 family. Opsin subfamily. As to expression, found only in the eye, where it is localized to the retinal pigment epithelium (RPE). In the RPE, it is localized to the microvilli that surround the photoreceptor outer segments.

It localises to the membrane. Functionally, may play a role in rpe physiology either by detecting light directly or by monitoring the concentration of retinoids or other photoreceptor-derived compounds. In Homo sapiens (Human), this protein is Visual pigment-like receptor peropsin (RRH).